A 496-amino-acid chain; its full sequence is MQVRVLDTTLRDGEQTPGVSLTPEEKLRIALKIDALGADIIEAGSAITSEGEREGIRKITSEGLRAEICSFARAVREDIDAAISCDVDSVHLVVPTSDLHLEHKLRKTREEVLEQAVDCTEYAVDHGILVELSAEDSTRSDMDFLRTIFREGIEAGAERICACDTVGILTPERSYEFYRGLSELGAPLSVHCHNDFGLAVANSLAGLRAGASEVHATINGIGERAGNAALEEVVVALKSLYDVDTSINIEMLYETSRMVARMTGVYLQPNKAIVGENAFAHESGIHADGVLKKAETYEPITPEMVGHGRGFVMGKHIGTHALRKRLDELGMKVADDKLMEIFRRVKTLGDMGKCVTDVDLQAIAEDVLGVMEDKVVDLQEVTIVSGNRVTPTASVKLRVDDREVLEAGTGVGPVDAAIVAIKKSLEDFADITLEEYHVDAITGGTDALIDVVIKLRHGDRIISARSTQPDIIMASVEAFLSGVNRLLANEKSEGTH.

The Pyruvate carboxyltransferase domain maps to 3–253 (VRVLDTTLRD…DTSINIEMLY (251 aa)).

Belongs to the alpha-IPM synthase/homocitrate synthase family. Homodimer.

It carries out the reaction pyruvate + acetyl-CoA + H2O = (3R)-citramalate + CoA + H(+). Its pathway is amino-acid biosynthesis; L-isoleucine biosynthesis; 2-oxobutanoate from pyruvate: step 1/3. In terms of biological role, catalyzes the condensation of pyruvate and acetyl-coenzyme A to form (R)-citramalate. This Methanothermobacter thermautotrophicus (strain ATCC 29096 / DSM 1053 / JCM 10044 / NBRC 100330 / Delta H) (Methanobacterium thermoautotrophicum) protein is Putative (R)-citramalate synthase CimA.